A 147-amino-acid polypeptide reads, in one-letter code: Nucleoside diphosphate kinase (147 aa).

ATP-binding residues include Lys9, Phe57, Arg85, Thr91, Arg102, and Asn112. His115 (pros-phosphohistidine intermediate) is an active-site residue.

Belongs to the NDK family. In terms of assembly, homotetramer. The cofactor is Mg(2+).

The protein localises to the cytoplasm. It catalyses the reaction a 2'-deoxyribonucleoside 5'-diphosphate + ATP = a 2'-deoxyribonucleoside 5'-triphosphate + ADP. The catalysed reaction is a ribonucleoside 5'-diphosphate + ATP = a ribonucleoside 5'-triphosphate + ADP. Its function is as follows. Major role in the synthesis of nucleoside triphosphates other than ATP. The ATP gamma phosphate is transferred to the NDP beta phosphate via a ping-pong mechanism, using a phosphorylated active-site intermediate. The chain is Nucleoside diphosphate kinase from Brevibacillus brevis (strain 47 / JCM 6285 / NBRC 100599).